Reading from the N-terminus, the 779-residue chain is Ribosome-releasing factor 2, mitochondrial (779 aa).

Positions 68–353 constitute a tr-type G domain; it reads AKIRNIGIMA…AVTTYLPSPE (286 aa). Residues 77–84, 141–145, and 195–198 each bind GTP; these read AHIDAGKT, DTPGH, and NKMD.

The protein belongs to the TRAFAC class translation factor GTPase superfamily. Classic translation factor GTPase family. EF-G/EF-2 subfamily.

It is found in the mitochondrion. It carries out the reaction GTP + H2O = GDP + phosphate + H(+). Mitochondrial GTPase that mediates the disassembly of ribosomes from messenger RNA at the termination of mitochondrial protein biosynthesis. Acts in collaboration with MRRF. GTP hydrolysis follows the ribosome disassembly and probably occurs on the ribosome large subunit. Not involved in the GTP-dependent ribosomal translocation step during translation elongation. The protein is Ribosome-releasing factor 2, mitochondrial (Gfm2) of Rattus norvegicus (Rat).